The following is a 1047-amino-acid chain: Atrial natriuretic peptide receptor 2 (1047 aa).

A signal peptide spans 1-16 (MALPSLLLVVAALAGG). Residues 17–458 (VRPPGARNLT…DKTPLSTLAI (442 aa)) are Extracellular-facing. N24 and N35 each carry an N-linked (GlcNAc...) asparagine glycan. A disulfide bridge connects residues C75 and C101. N161, N195, N244, N277, and N349 each carry an N-linked (GlcNAc...) asparagine glycan. Residues 459–478 (VALGTGITFIMFGVSSFLIF) traverse the membrane as a helical segment. The Cytoplasmic segment spans residues 479-1047 (RKLMLEKELA…GERKGPPGLL (569 aa)). Position 513 is a phosphoserine (S513). A Protein kinase domain is found at 513–786 (SRLTLSLRGS…PDFGQIKGFI (274 aa)). T516 carries the phosphothreonine modification. 4 positions are modified to phosphoserine: S518, S522, S523, and S526. T529 is modified (phosphothreonine). The 131-residue stretch at 861–991 (TIYFSDIVGF…DTVNTASRME (131 aa)) folds into the Guanylate cyclase domain.

It belongs to the adenylyl cyclase class-4/guanylyl cyclase family. In terms of processing, phosphorylated. Phosphorylation of the protein kinase-like domain is required for full activation by CNP. Glycosylated.

Its subcellular location is the cell membrane. The enzyme catalyses GTP = 3',5'-cyclic GMP + diphosphate. Its function is as follows. Receptor for the C-type natriuretic peptide NPPC/CNP hormone. Has guanylate cyclase activity upon binding of its ligand. May play a role in the regulation of skeletal growth. The chain is Atrial natriuretic peptide receptor 2 (Npr2) from Rattus norvegicus (Rat).